The sequence spans 312 residues: Ribosomal protein L11 methyltransferase (312 aa).

Positions 162, 183, 205, and 248 each coordinate S-adenosyl-L-methionine.

The protein belongs to the methyltransferase superfamily. PrmA family.

It localises to the cytoplasm. It catalyses the reaction L-lysyl-[protein] + 3 S-adenosyl-L-methionine = N(6),N(6),N(6)-trimethyl-L-lysyl-[protein] + 3 S-adenosyl-L-homocysteine + 3 H(+). Functionally, methylates ribosomal protein L11. The polypeptide is Ribosomal protein L11 methyltransferase (Exiguobacterium sp. (strain ATCC BAA-1283 / AT1b)).